The following is a 371-amino-acid chain: Sensor histidine kinase YvfT (371 aa).

Over 1–10 (MKKAISIFPK) the chain is Extracellular. A helical transmembrane segment spans residues 11-31 (EFGFFPYIFLVYTIMPFLSLL). Residues 32 to 38 (KESGVKQ) are Cytoplasmic-facing. A helical membrane pass occupies residues 39–59 (GIGYGMLLLFVAAYRQLFCSV). Residues 60–71 (GKASFTYWLIVQ) lie on the Extracellular side of the membrane. A helical membrane pass occupies residues 72 to 92 (MAVILMYSVFYNITYIYLGFF). At 93–109 (PANFVGYYKEKTNFNRA) the chain is on the cytoplasmic side. The helical transmembrane segment at 110 to 130 (FCALIFILLFPCLYQFIANSV) threads the bilayer. Topologically, residues 131-135 (SLREL) are extracellular. Residues 136–156 (FSVLPFLVIMLISPFGIRSMF) traverse the membrane as a helical segment. The Cytoplasmic portion of the chain corresponds to 157 to 371 (RRIELEAKLA…LTIPLIKKAE (215 aa)). The 182-residue stretch at 187–368 (DLHDTLGHTL…VVALTIPLIK (182 aa)) folds into the Histidine kinase domain. The residue at position 189 (H189) is a Phosphohistidine; by autocatalysis.

Its subcellular location is the cell membrane. The catalysed reaction is ATP + protein L-histidine = ADP + protein N-phospho-L-histidine.. Its function is as follows. Member of the two-component regulatory system YvfT/YvfU. Probably activates YvfU by phosphorylation. This chain is Sensor histidine kinase YvfT (yvfT), found in Bacillus subtilis (strain 168).